The sequence spans 1310 residues: Angiotensin-converting enzyme (1310 aa).

The N-terminal stretch at M1–L33 is a signal peptide. Over T34–R1260 the chain is Extracellular. Peptidase M2 domains are found at residues A45–P628 and V647–P1226. N-linked (GlcNAc...) asparagine glycosylation is found at N59, N79, and N151. Residues C162 and C170 are joined by a disulfide bond. Residue Y236 coordinates chloride. N323 carries an N-linked (GlcNAc...) asparagine glycan. C364 and C382 form a disulfide bridge. H395 serves as a coordination point for Zn(2+). E396 serves as the catalytic Proton acceptor 1. The Zn(2+) site is built by H399 and E422. 2 N-linked (GlcNAc...) asparagine glycosylation sites follow: N449 and N513. The Proton donor 1 role is filled by H524. R533 contacts chloride. C549 and C561 are joined by a disulfide. N-linked (GlcNAc...) asparagine glycosylation is found at N681, N699, and N718. The cysteines at positions 761 and 767 are disulfide-linked. Residues R795 and Y833 each coordinate chloride. N946 is a glycosylation site (N-linked (GlcNAc...) asparagine). A disulfide bond links C961 and C979. Zn(2+) is bound at residue H992. The active-site Proton acceptor 2 is the E993. Zn(2+) is bound by residues H996 and E1020. The chloride site is built by W1094 and R1098. The Proton donor 2 role is filled by H1122. Residue R1131 coordinates chloride. A disulfide bridge connects residues C1147 and C1159. The N-linked (GlcNAc...) asparagine glycan is linked to N1195. The segment at H1219–R1260 is juxtamembrane stalk. The chain crosses the membrane as a helical span at residues V1261–T1281. At Q1282 to S1310 the chain is on the cytoplasmic side. At S1303 the chain carries Phosphoserine.

The protein belongs to the peptidase M2 family. In terms of assembly, monomer and homodimer; homodimerizes following binding to an inhibitor. Interacts with calmodulin (CALM1, CALM2 or CALM3); interaction takes place in the cytoplasmic region and regulates phosphorylation and proteolytic cleavage. Zn(2+) is required as a cofactor. The cofactor is chloride. Post-translationally, N-glycosylated. Phosphorylated by CK2 on Ser-1303; which allows membrane retention. Phosphorylated on tyrosine residues on its extracellular part, promoting cleavage by secretase enzymes and formation of the soluble form (Angiotensin-converting enzyme, soluble form). In terms of processing, produced following proteolytic cleavage by secretase enzymes that cleave the transmembrane form in the juxtamembrane stalk region upstream of the transmembrane region. Cleavage can take place at different sites of the juxtamembrane stalk region. As to expression, testis-specific isoform is expressed in spermatocytes, adult testis.

It localises to the cell membrane. Its subcellular location is the cytoplasm. The protein localises to the secreted. It carries out the reaction Release of a C-terminal dipeptide, oligopeptide-|-Xaa-Yaa, when Xaa is not Pro, and Yaa is neither Asp nor Glu. Thus, conversion of angiotensin I to angiotensin II, with increase in vasoconstrictor activity, but no action on angiotensin II.. It catalyses the reaction angiotensin I + H2O = L-histidyl-L-leucine + angiotensin II. The enzyme catalyses bradykinin + H2O = L-Phe-L-Arg + bradykinin(1-7). The catalysed reaction is substance P + H2O = substance P(1-9) + L-Leu-L-Met-NH2. It carries out the reaction substance P + H2O = substance P(1-8) + Gly-L-Leu-L-Met-NH2. It catalyses the reaction substance P + H2O = L-Phe-L-Phe-Gly-L-Leu-L-Met-NH2 + substance P(1-6). The enzyme catalyses neurotensin + H2O = neurotensin(1-11) + L-isoleucyl-L-leucine. The catalysed reaction is goralatide + H2O = N-acetyl-L-seryl-L-aspartate + L-lysyl-L-proline. It carries out the reaction Met-enkephalin + H2O = L-phenylalanyl-L-methionine + L-tyrosylglycylglycine. It catalyses the reaction Leu-enkephalin + H2O = L-tyrosylglycylglycine + L-phenylalanyl-L-leucine. The enzyme catalyses Met-enkephalin-Arg-Phe + H2O = L-arginyl-L-phenylalanine + Met-enkephalin. Its activity is regulated as follows. The dipeptidyl carboxypeptidase activity is strongly activated by chloride. Specifically inhibited by lisinopril. Inhibited by mixanpril, an orally-active drug used for the treatment of hypertension. With respect to regulation, strongly inhibited by lisinopril and captopril. In terms of biological role, dipeptidyl carboxypeptidase that removes dipeptides from the C-terminus of a variety of circulating hormones, such as angiotensin I, bradykinin or enkephalins, thereby playing a key role in the regulation of blood pressure, electrolyte homeostasis or synaptic plasticity. Composed of two similar catalytic domains, each possessing a functional active site, with different selectivity for substrates. Plays a major role in the angiotensin-renin system that regulates blood pressure and sodium retention by the kidney by converting angiotensin I to angiotensin II, resulting in an increase of the vasoconstrictor activity of angiotensin. Also able to inactivate bradykinin, a potent vasodilator, and therefore enhance the blood pressure response. Acts as a regulator of synaptic transmission by mediating cleavage of neuropeptide hormones, such as substance P, neurotensin or enkephalins. Catalyzes degradation of different enkephalin neuropeptides (Met-enkephalin, Leu-enkephalin, Met-enkephalin-Arg-Phe and possibly Met-enkephalin-Arg-Gly-Leu). Acts as a regulator of synaptic plasticity in the nucleus accumbens of the brain by mediating cleavage of Met-enkephalin-Arg-Phe, a strong ligand of Mu-type opioid receptor OPRM1, into Met-enkephalin. Met-enkephalin-Arg-Phe cleavage by ACE decreases activation of OPRM1, leading to long-term synaptic potentiation of glutamate release. Also acts as a regulator of hematopoietic stem cell differentiation by mediating degradation of hemoregulatory peptide N-acetyl-SDKP (AcSDKP). Acts as a regulator of cannabinoid signaling pathway by mediating degradation of hemopressin, an antagonist peptide of the cannabinoid receptor CNR1. Involved in amyloid-beta metabolism by catalyzing degradation of Amyloid-beta protein 40 and Amyloid-beta protein 42 peptides, thereby preventing plaque formation. Catalyzes cleavage of cholecystokinin (maturation of Cholecystokinin-8 and Cholecystokinin-5) and Gonadoliberin-1 (both maturation and degradation) hormones. Degradation of hemoregulatory peptide N-acetyl-SDKP (AcSDKP) and amyloid-beta proteins is mediated by the N-terminal catalytic domain, while angiotensin I and cholecystokinin cleavage is mediated by the C-terminal catalytic region. Functionally, soluble form that is released in blood plasma and other body fluids following proteolytic cleavage in the juxtamembrane stalk region. Its function is as follows. Isoform produced by alternative promoter usage that is specifically expressed in spermatocytes and adult testis, and which is required for male fertility. In contrast to somatic isoforms, only contains one catalytic domain. Acts as a dipeptidyl carboxypeptidase that removes dipeptides from the C-terminus of substrates. The identity of substrates that are needed for male fertility is unknown. May also have a glycosidase activity which releases GPI-anchored proteins from the membrane by cleaving the mannose linkage in the GPI moiety. The GPIase activity was reported to be essential for the egg-binding ability of the sperm. This activity is however unclear and has been challenged by other groups, suggesting that it may be indirect. This chain is Angiotensin-converting enzyme, found in Oryctolagus cuniculus (Rabbit).